The sequence spans 441 residues: Vacuolar cation/proton exchanger 5 (441 aa).

The N-myristoyl glycine moiety is linked to residue G2. Residues 2 to 69 (GCCKVPALIQ…PNNSVLQSFK (68 aa)) lie on the Cytoplasmic side of the membrane. S-palmitoyl cysteine attachment occurs at residues C3 and C4. A helical transmembrane segment spans residues 70-90 (IVILSNKLNLLLPFGPLAILL). Residues 91–97 (HYLTDNK) lie on the Extracellular side of the membrane. Residues 98–118 (GWIFLLSLVGITPLAERLGYA) traverse the membrane as a helical segment. Residues 119–129 (TEQLACYTGST) are Cytoplasmic-facing. Residues 130–150 (VGGLLNATFGNVTELIISIFA) traverse the membrane as a helical segment. The interval 139-174 (GNVTELIISIFALKSGMIRVVQLTLLGSILSNMLLV) is cation selection. Topologically, residues 151-165 (LKSGMIRVVQLTLLG) are extracellular. The chain crosses the membrane as a helical span at residues 166–186 (SILSNMLLVLGCAFFCGGLVF). At 187-197 (SQKEQVFDKGN) the chain is on the cytoplasmic side. The chain crosses the membrane as a helical span at residues 198–218 (AVVNSGLLLMAVMGLLFPAVL). At 219-231 (HYTHSEVHAGSSE) the chain is on the extracellular side. Residues 232–252 (LALSRFSSCIMLVAYAAYLFF) form a helical membrane-spanning segment. Residues 253–286 (QLKSQPSSYTPLTEETNQNEETSDDDEDPEISKW) are Cytoplasmic-facing. A helical transmembrane segment spans residues 287–307 (EAIIWLSILTAWVSLLSGYLV). The Extracellular segment spans residues 308–311 (DAIE). A helical membrane pass occupies residues 312–332 (GASVSWKIPISFISVILLPIV). At 333–354 (GNAAEHAGAIMFAMKDKLDLSL) the chain is on the cytoplasmic side. Positions 333-368 (GNAAEHAGAIMFAMKDKLDLSLGVAIGSSIQISMFA) are cation selection. The helical transmembrane segment at 355 to 375 (GVAIGSSIQISMFAVPFCVVI) threads the bilayer. Residues 376–384 (GWMMGAQMD) lie on the Extracellular side of the membrane. The helical transmembrane segment at 385–405 (LNFQLFETATLFITVIVVAFF) threads the bilayer. Over 406–412 (LQEGTSN) the chain is Cytoplasmic. The chain crosses the membrane as a helical span at residues 413 to 433 (YFKGLMLILCYLIVAASFFVH). Topologically, residues 434-441 (EDPHQDDI) are extracellular.

The protein belongs to the Ca(2+):cation antiporter (CaCA) (TC 2.A.19) family. Cation/proton exchanger (CAX) subfamily.

It localises to the vacuole membrane. In terms of biological role, vacuolar cation/proton exchanger (CAX). Translocates Ca(2+) and other metal ions into vacuoles using the proton gradient formed by H(+)-ATPase and H(+)-pyrophosphatase. This is Vacuolar cation/proton exchanger 5 (CAX5) from Arabidopsis thaliana (Mouse-ear cress).